A 62-amino-acid chain; its full sequence is Sec-independent protein translocase protein TatA (62 aa).

The helical transmembrane segment at 1-21 (MFGIGIPELLVIFVLILLVFG) threads the bilayer.

It belongs to the TatA/E family. The Tat system comprises two distinct complexes: a TatABC complex, containing multiple copies of TatA, TatB and TatC subunits, and a separate TatA complex, containing only TatA subunits. Substrates initially bind to the TatABC complex, which probably triggers association of the separate TatA complex to form the active translocon.

It is found in the cell inner membrane. Its function is as follows. Part of the twin-arginine translocation (Tat) system that transports large folded proteins containing a characteristic twin-arginine motif in their signal peptide across membranes. TatA could form the protein-conducting channel of the Tat system. In Oleidesulfovibrio alaskensis (strain ATCC BAA-1058 / DSM 17464 / G20) (Desulfovibrio alaskensis), this protein is Sec-independent protein translocase protein TatA.